Here is a 94-residue protein sequence, read N- to C-terminus: Small ribosomal subunit protein bS6 (94 aa).

The protein belongs to the bacterial ribosomal protein bS6 family.

In terms of biological role, binds together with bS18 to 16S ribosomal RNA. This is Small ribosomal subunit protein bS6 from Clostridium botulinum (strain Kyoto / Type A2).